Consider the following 397-residue polypeptide: Phosphoglycerate kinase (397 aa).

Substrate contacts are provided by residues 25–27, arginine 41, 64–67, arginine 118, and arginine 151; these read DLN and HLGR. Residues lysine 202, glutamate 324, and 350–353 contribute to the ATP site; that span reads GGDT.

Belongs to the phosphoglycerate kinase family. Monomer.

The protein localises to the cytoplasm. It catalyses the reaction (2R)-3-phosphoglycerate + ATP = (2R)-3-phospho-glyceroyl phosphate + ADP. Its pathway is carbohydrate degradation; glycolysis; pyruvate from D-glyceraldehyde 3-phosphate: step 2/5. This is Phosphoglycerate kinase from Acidovorax sp. (strain JS42).